The sequence spans 502 residues: Glycerol kinase (502 aa).

ADP is bound at residue Thr14. Thr14, Thr15, and Ser16 together coordinate ATP. Thr14 contributes to the sn-glycerol 3-phosphate binding site. Arg18 serves as a coordination point for ADP. Arg84, Glu85, Tyr136, and Asp246 together coordinate sn-glycerol 3-phosphate. Glycerol-binding residues include Arg84, Glu85, Tyr136, Asp246, and Gln247. ADP-binding residues include Thr268 and Gly311. ATP-binding residues include Thr268, Gly311, Gln315, and Gly412. The ADP site is built by Gly412 and Asn416.

It belongs to the FGGY kinase family. In terms of assembly, homotetramer and homodimer (in equilibrium). Heterodimer with EIIA-Glc. Binds 1 zinc ion per glycerol kinase EIIA-Glc dimer. The zinc ion is important for dimerization.

It catalyses the reaction glycerol + ATP = sn-glycerol 3-phosphate + ADP + H(+). It functions in the pathway polyol metabolism; glycerol degradation via glycerol kinase pathway; sn-glycerol 3-phosphate from glycerol: step 1/1. Activity of this regulatory enzyme is affected by several metabolites. Allosterically and non-competitively inhibited by fructose 1,6-bisphosphate (FBP) and unphosphorylated phosphocarrier protein EIIA-Glc (III-Glc), an integral component of the bacterial phosphotransferase (PTS) system. Key enzyme in the regulation of glycerol uptake and metabolism. Catalyzes the phosphorylation of glycerol to yield sn-glycerol 3-phosphate. The polypeptide is Glycerol kinase (Shigella flexneri).